A 274-amino-acid chain; its full sequence is Large ribosomal subunit protein uL2cz/uL2cy (274 aa).

Disordered stretches follow at residues 1–21 (MAIH…VDSQ) and 225–254 (PVDH…PALG).

It belongs to the universal ribosomal protein uL2 family. As to quaternary structure, part of the 50S ribosomal subunit.

The protein localises to the plastid. It localises to the chloroplast. This chain is Large ribosomal subunit protein uL2cz/uL2cy (rpl2-A), found in Draba nemorosa (Woodland whitlowgrass).